A 289-amino-acid polypeptide reads, in one-letter code: Aquaporin PIP2-3 (289 aa).

The tract at residues 1–25 is disordered; that stretch reads MAKQDIEASGPEAGEFSAKDYTDPP. The next 2 helical transmembrane spans lie at 43 to 63 and 80 to 100; these read AVIA…ATVI and CGGV…FILV. Residues 112–114 carry the NPA 1 motif; sequence NPA. A run of 3 helical transmembrane segments spans residues 131-151, 173-193, and 207-227; these read LLYI…VKGF, GTGL…VFSA, and VLAP…TIPI. Residues 233–235 carry the NPA 2 motif; the sequence is NPA. A helical transmembrane segment spans residues 255-275; the sequence is IFWVGPLIGAAIAAAYHQYVL.

The protein belongs to the MIP/aquaporin (TC 1.A.8) family. PIP (TC 1.A.8.11) subfamily.

It localises to the cell membrane. Its function is as follows. Aquaporins facilitate the transport of water and small neutral solutes across cell membranes. This is Aquaporin PIP2-3 (PIP2-3) from Zea mays (Maize).